The chain runs to 134 residues: D-dopachrome decarboxylase-like protein (134 aa).

The protein belongs to the MIF family.

It localises to the cytoplasm. May have lyase activity. This Homo sapiens (Human) protein is D-dopachrome decarboxylase-like protein (DDTL).